Consider the following 321-residue polypeptide: Calcium-regulated beta-propeller protein CarP (321 aa).

An N-terminal signal peptide occupies residues 1-42 (MTIHAQTPEPFSMSRAFTPRRLLLAVLLVALSALVLLGQSFR).

This sequence belongs to the YjiK family.

It is found in the cell inner membrane. Its function is as follows. Plays a role in intracellular Ca(2+) homeostasis. Involved in modulating Ca(2+)-induced swarming motility and pyocyanine production. Plays a role in regulating virulence in a Ca(2+)-dependent manner. Involved in cell protection against oxidative stress in the presence of elevated Ca(2+). In Pseudomonas aeruginosa (strain ATCC 15692 / DSM 22644 / CIP 104116 / JCM 14847 / LMG 12228 / 1C / PRS 101 / PAO1), this protein is Calcium-regulated beta-propeller protein CarP.